We begin with the raw amino-acid sequence, 565 residues long: Membrane protein insertase YidC (565 aa).

The next 6 membrane-spanning stretches (helical) occupy residues 6-26 (VLLI…WSKN), 348-368 (LMAL…SLLH), 370-390 (WGWA…PLSA), 437-457 (GGCF…WVLV), 479-499 (PYFI…KLTP), and 516-536 (PLIF…YWVI).

This sequence belongs to the OXA1/ALB3/YidC family. Type 1 subfamily. Interacts with the Sec translocase complex via SecD. Specifically interacts with transmembrane segments of nascent integral membrane proteins during membrane integration.

Its subcellular location is the cell inner membrane. Functionally, required for the insertion and/or proper folding and/or complex formation of integral membrane proteins into the membrane. Involved in integration of membrane proteins that insert both dependently and independently of the Sec translocase complex, as well as at least some lipoproteins. Aids folding of multispanning membrane proteins. The sequence is that of Membrane protein insertase YidC from Xylella fastidiosa (strain M23).